Consider the following 141-residue polypeptide: Nucleoside diphosphate kinase (141 aa).

The ATP site is built by K11, F59, R87, T93, R104, and N114. Residue H117 is the Pros-phosphohistidine intermediate of the active site.

Belongs to the NDK family. In terms of assembly, homotetramer. The cofactor is Mg(2+).

The protein resides in the cytoplasm. The enzyme catalyses a 2'-deoxyribonucleoside 5'-diphosphate + ATP = a 2'-deoxyribonucleoside 5'-triphosphate + ADP. It carries out the reaction a ribonucleoside 5'-diphosphate + ATP = a ribonucleoside 5'-triphosphate + ADP. Its function is as follows. Major role in the synthesis of nucleoside triphosphates other than ATP. The ATP gamma phosphate is transferred to the NDP beta phosphate via a ping-pong mechanism, using a phosphorylated active-site intermediate. The protein is Nucleoside diphosphate kinase of Polynucleobacter necessarius subsp. necessarius (strain STIR1).